A 72-amino-acid chain; its full sequence is Pre-histone-like nucleoprotein (72 aa).

The residue at position 2 (serine 2) is an N-acetylserine; by host. Positions 2-14 (SILISPSDNRGWG) are excised as a propeptide.

The protein belongs to the adenoviridae histone-like nucleoprotein family. As to quaternary structure, interacts with the core-capsid bridging protein; this interaction bridges the virus core to the capsid. Cleaved near the N-terminus by the viral protease during virion maturation to form the mature protein.

It localises to the host nucleus. The protein resides in the host nucleolus. The protein localises to the virion. In terms of biological role, strongly bound to viral DNA and responsible for wrapping and condensing the viral DNA. Probably promotes viral genome import into the nucleus and is still associated with the viral DNA when the latter enters into the host nucleus. The sequence is that of Pre-histone-like nucleoprotein from Galliformes (FAdV-1).